Consider the following 172-residue polypeptide: Adenine phosphoribosyltransferase (172 aa).

Belongs to the purine/pyrimidine phosphoribosyltransferase family. As to quaternary structure, homodimer.

It is found in the cytoplasm. It catalyses the reaction AMP + diphosphate = 5-phospho-alpha-D-ribose 1-diphosphate + adenine. Its pathway is purine metabolism; AMP biosynthesis via salvage pathway; AMP from adenine: step 1/1. Functionally, catalyzes a salvage reaction resulting in the formation of AMP, that is energically less costly than de novo synthesis. The polypeptide is Adenine phosphoribosyltransferase (Streptococcus agalactiae serotype III (strain NEM316)).